The sequence spans 388 residues: MKHLHRFFSSDASGGIILIIAAILAMIMANSGATSGWYHDFLETPVQLRVGSLEINKNMLLWINDALMAVFFLLVGLEVKRELMQGSLASLLQAAFPVIAAIGGMIVPALLYLAFNYADPITREGWAIPAATDIAFALGVLALLGSRVPLVLKIFLMALAIIDDLGAIIIIALFYTNDLSMASLGVAAVAIAVLAVLNLCGVRRTGVYILVGVVLWTAVLKSGVHATLAGVIVGFFIPLKEKHGRSPAKRLEHVLHPWVAYLILPLFAFANAGVSLQGVTLDGLTSILPLGIIAGLLIGKPLGISLFCWLALRLKLAHLPEGTTYQQIMVVGILCGIGFTMSIFIASLAFGSVDPELINWAKLGILVGSISSAVIGYSWLRVRLRPSV.

The Cytoplasmic segment spans residues 1–11 (MKHLHRFFSSD). A helical membrane pass occupies residues 12–31 (ASGGIILIIAAILAMIMANS). Topologically, residues 32–58 (GATSGWYHDFLETPVQLRVGSLEINKN) are periplasmic. Residues 59–80 (MLLWINDALMAVFFLLVGLEVK) traverse the membrane as a helical segment. Residues 81–96 (RELMQGSLASLLQAAF) lie on the Cytoplasmic side of the membrane. A helical transmembrane segment spans residues 97 to 116 (PVIAAIGGMIVPALLYLAFN). The Periplasmic segment spans residues 117–122 (YADPIT). The chain crosses the membrane as a helical span at residues 123-130 (REGWAIPA). Residues 131-154 (ATDIAFALGVLALLGSRVPLVLKI) lie on the Cytoplasmic side of the membrane. A helical membrane pass occupies residues 155-176 (FLMALAIIDDLGAIIIIALFYT). Residues 177–180 (NDLS) are Periplasmic-facing. The helical transmembrane segment at 181-200 (MASLGVAAVAIAVLAVLNLC) threads the bilayer. The Cytoplasmic portion of the chain corresponds to 201 to 204 (GVRR). The chain crosses the membrane as a helical span at residues 205–222 (TGVYILVGVVLWTAVLKS). Position 223 (G223) is a topological domain, periplasmic. The helical transmembrane segment at 224 to 236 (VHATLAGVIVGFF) threads the bilayer. At 237–253 (IPLKEKHGRSPAKRLEH) the chain is on the cytoplasmic side. The chain crosses the membrane as a helical span at residues 254 to 272 (VLHPWVAYLILPLFAFANA). Residues 273–286 (GVSLQGVTLDGLTS) lie on the Periplasmic side of the membrane. Residues 287 to 310 (ILPLGIIAGLLIGKPLGISLFCWL) traverse the membrane as a helical segment. At 311–339 (ALRLKLAHLPEGTTYQQIMVVGILCGIGF) the chain is on the cytoplasmic side. A helical transmembrane segment spans residues 340–350 (TMSIFIASLAF). The Periplasmic segment spans residues 351 to 357 (GSVDPEL). Residues 358–380 (INWAKLGILVGSISSAVIGYSWL) form a helical membrane-spanning segment. The Cytoplasmic portion of the chain corresponds to 381 to 388 (RVRLRPSV).

The protein belongs to the NhaA Na(+)/H(+) (TC 2.A.33) antiporter family.

The protein localises to the cell inner membrane. It catalyses the reaction Na(+)(in) + 2 H(+)(out) = Na(+)(out) + 2 H(+)(in). In terms of biological role, na(+)/H(+) antiporter that extrudes sodium in exchange for external protons. In Shigella flexneri serotype 5b (strain 8401), this protein is Na(+)/H(+) antiporter NhaA.